The following is a 243-amino-acid chain: Hydroxyacylglutathione hydrolase (243 aa).

7 residues coordinate Zn(2+): His-52, His-54, Asp-56, His-57, His-108, Asp-125, and His-163.

This sequence belongs to the metallo-beta-lactamase superfamily. Glyoxalase II family. In terms of assembly, monomer. Zn(2+) serves as cofactor.

The catalysed reaction is an S-(2-hydroxyacyl)glutathione + H2O = a 2-hydroxy carboxylate + glutathione + H(+). It functions in the pathway secondary metabolite metabolism; methylglyoxal degradation; (R)-lactate from methylglyoxal: step 2/2. Functionally, thiolesterase that catalyzes the hydrolysis of S-D-lactoyl-glutathione to form glutathione and D-lactic acid. The chain is Hydroxyacylglutathione hydrolase from Haemophilus influenzae (strain PittGG).